Consider the following 354-residue polypeptide: D-alanine--D-alanine ligase (354 aa).

An ATP-grasp domain is found at 154–348 (RSWFLTNNIN…FTNLIEEIIK (195 aa)). 181 to 232 (MKRPYVIKPITQGSSIGIEVIFEEDDFNFANYDFPYGDQVIIEKYIKGRELQ) is an ATP binding site. Mg(2+) contacts are provided by Glu301, Glu315, and Asn317.

This sequence belongs to the D-alanine--D-alanine ligase family. Mg(2+) serves as cofactor. The cofactor is Mn(2+).

It localises to the cytoplasm. The catalysed reaction is 2 D-alanine + ATP = D-alanyl-D-alanine + ADP + phosphate + H(+). The protein operates within cell wall biogenesis; peptidoglycan biosynthesis. Its function is as follows. Cell wall formation. This chain is D-alanine--D-alanine ligase, found in Rickettsia canadensis (strain McKiel).